We begin with the raw amino-acid sequence, 48 residues long: Hemoglobin subunit beta-B (48 aa).

The Globin domain occupies 2–48 (EWTDAERGAILSLWGKIDPDELGPALLARXXLVYXXTQRYFASFGDL).

This sequence belongs to the globin family. Heterotetramer of two alpha chains and two beta chains. In terms of tissue distribution, red blood cells.

Involved in oxygen transport from gills to the various peripheral tissues. The chain is Hemoglobin subunit beta-B from Catostomus clarkii (Desert sucker).